We begin with the raw amino-acid sequence, 593 residues long: Actin-histidine N-methyltransferase (593 aa).

Residues 1-21 (MGKKSRVKTQKSGTGATAAVS) form a disordered region. Residues Arg75, 104–106 (EGF), Arg254, 275–279 (DMCNH), and 325–327 (SGF) contribute to the S-adenosyl-L-methionine site. The SET domain occupies 94–314 (EGFEIANFEE…AGEQIYIFYG (221 aa)). Positions 549-593 (GFVNGENSLFNGTKSESENLIKEESNRETEDAKESSSESTDEVKE) are disordered. A compositionally biased stretch (polar residues) spans 553-562 (GENSLFNGTK). The span at 563-593 (SESENLIKEESNRETEDAKESSSESTDEVKE) shows a compositional bias: basic and acidic residues.

It belongs to the class V-like SAM-binding methyltransferase superfamily. SETD3 actin-histidine methyltransferase family.

It is found in the cytoplasm. It carries out the reaction L-histidyl-[protein] + S-adenosyl-L-methionine = N(tele)-methyl-L-histidyl-[protein] + S-adenosyl-L-homocysteine + H(+). In terms of biological role, protein-histidine N-methyltransferase that specifically mediates 3-methylhistidine (tele-methylhistidine) methylation of actin at 'His-73'. Does not have protein-lysine N-methyltransferase activity and probably only catalyzes histidine methylation of actin. In Gallus gallus (Chicken), this protein is Actin-histidine N-methyltransferase.